We begin with the raw amino-acid sequence, 429 residues long: Enolase (429 aa).

(2R)-2-phosphoglycerate is bound at residue Q163. E205 functions as the Proton donor in the catalytic mechanism. Mg(2+) is bound by residues D242, E285, and D312. (2R)-2-phosphoglycerate contacts are provided by K337, R366, S367, and K388. K337 (proton acceptor) is an active-site residue.

The protein belongs to the enolase family. The cofactor is Mg(2+).

The protein localises to the cytoplasm. Its subcellular location is the secreted. The protein resides in the cell surface. It carries out the reaction (2R)-2-phosphoglycerate = phosphoenolpyruvate + H2O. It participates in carbohydrate degradation; glycolysis; pyruvate from D-glyceraldehyde 3-phosphate: step 4/5. Its function is as follows. Catalyzes the reversible conversion of 2-phosphoglycerate (2-PG) into phosphoenolpyruvate (PEP). It is essential for the degradation of carbohydrates via glycolysis. This chain is Enolase, found in Methylorubrum extorquens (strain CM4 / NCIMB 13688) (Methylobacterium extorquens).